A 318-amino-acid chain; its full sequence is tRNA methyltransferase 10 homolog B (318 aa).

Over residues 1-10 the composition is skewed to basic and acidic residues; that stretch reads MDCKSEESAQ. Residues 1-105 form a disordered region; that stretch reads MDCKSEESAQ…DPGNGTCPQH (105 aa). The span at 52–63 shows a compositional bias: polar residues; that stretch reads SPANSAVWSSKN. Basic residues predominate over residues 64–83; sequence MQRKQRHWERIVSSKKSKRK. Residues 72 to 93 are a coiled coil; that stretch reads ERIVSSKKSKRKQERERRKAKR. Over residues 84 to 96 the composition is skewed to basic and acidic residues; sequence QERERRKAKRAED. Residues 114 to 311 form the SAM-dependent MTase TRM10-type domain; the sequence is TKEKLLEAKH…KGVSPGKGYV (198 aa).

It belongs to the class IV-like SAM-binding methyltransferase superfamily. TRM10 family.

The catalysed reaction is guanosine(9) in tRNA + S-adenosyl-L-methionine = N(1)-methylguanosine(9) in tRNA + S-adenosyl-L-homocysteine + H(+). S-adenosyl-L-methionine-dependent guanine N(1)-methyltransferase that catalyzes the formation of N(1)-methylguanine at position 9 (m1G9) in tRNAs. Probably not able to catalyze formation of N(1)-methyladenine at position 9 (m1A9) in tRNAs. The chain is tRNA methyltransferase 10 homolog B (Trmt10b) from Mus musculus (Mouse).